The sequence spans 171 residues: Crossover junction endodeoxyribonuclease RuvC (171 aa).

Catalysis depends on residues D7, E66, and D138. The Mg(2+) site is built by D7, E66, and D138.

Belongs to the RuvC family. Homodimer which binds Holliday junction (HJ) DNA. The HJ becomes 2-fold symmetrical on binding to RuvC with unstacked arms; it has a different conformation from HJ DNA in complex with RuvA. In the full resolvosome a probable DNA-RuvA(4)-RuvB(12)-RuvC(2) complex forms which resolves the HJ. Mg(2+) is required as a cofactor.

Its subcellular location is the cytoplasm. It carries out the reaction Endonucleolytic cleavage at a junction such as a reciprocal single-stranded crossover between two homologous DNA duplexes (Holliday junction).. Its function is as follows. The RuvA-RuvB-RuvC complex processes Holliday junction (HJ) DNA during genetic recombination and DNA repair. Endonuclease that resolves HJ intermediates. Cleaves cruciform DNA by making single-stranded nicks across the HJ at symmetrical positions within the homologous arms, yielding a 5'-phosphate and a 3'-hydroxyl group; requires a central core of homology in the junction. The consensus cleavage sequence is 5'-(A/T)TT(C/G)-3'. Cleavage occurs on the 3'-side of the TT dinucleotide at the point of strand exchange. HJ branch migration catalyzed by RuvA-RuvB allows RuvC to scan DNA until it finds its consensus sequence, where it cleaves and resolves the cruciform DNA. In Francisella philomiragia subsp. philomiragia (strain ATCC 25017 / CCUG 19701 / FSC 153 / O#319-036), this protein is Crossover junction endodeoxyribonuclease RuvC.